A 158-amino-acid polypeptide reads, in one-letter code: Phosphopantetheine adenylyltransferase (158 aa).

Substrate is bound at residue Thr10. Residues 10–11 (TF) and His18 contribute to the ATP site. Residues Lys42, Leu74, and Arg88 each coordinate substrate. ATP-binding positions include 89 to 91 (GLR), Glu99, and 124 to 130 (YSFISSS).

It belongs to the bacterial CoaD family. In terms of assembly, homohexamer. The cofactor is Mg(2+).

The protein resides in the cytoplasm. The enzyme catalyses (R)-4'-phosphopantetheine + ATP + H(+) = 3'-dephospho-CoA + diphosphate. It functions in the pathway cofactor biosynthesis; coenzyme A biosynthesis; CoA from (R)-pantothenate: step 4/5. Reversibly transfers an adenylyl group from ATP to 4'-phosphopantetheine, yielding dephospho-CoA (dPCoA) and pyrophosphate. This Erwinia tasmaniensis (strain DSM 17950 / CFBP 7177 / CIP 109463 / NCPPB 4357 / Et1/99) protein is Phosphopantetheine adenylyltransferase.